Reading from the N-terminus, the 554-residue chain is Glutamine--tRNA ligase (554 aa).

The 'HIGH' region motif lies at 34–44 (PEPNGYLHIGH). ATP contacts are provided by residues 35-37 (EPN) and 41-47 (HIGHAKS). D67 and Y212 together coordinate L-glutamine. ATP-binding positions include T231, 261–262 (RL), and 269–271 (MSK). A 'KMSKS' region motif is present at residues 268-272 (VMSKR). The segment at 317-324 (TKQDNTIE) is interaction with tRNA.

It belongs to the class-I aminoacyl-tRNA synthetase family. In terms of assembly, monomer.

Its subcellular location is the cytoplasm. The enzyme catalyses tRNA(Gln) + L-glutamine + ATP = L-glutaminyl-tRNA(Gln) + AMP + diphosphate. In Escherichia coli O7:K1 (strain IAI39 / ExPEC), this protein is Glutamine--tRNA ligase.